A 579-amino-acid chain; its full sequence is MFS-type transporter sphD (579 aa).

Residues 17–62 (SAFAVRAEPDSEPVSEKQGTAETDAETGAGGTEVPAERNGEDDVER) form a disordered region. Basic and acidic residues predominate over residues 51-62 (PAERNGEDDVER). Transmembrane regions (helical) follow at residues 73-93 (AFIG…ALGI), 110-130 (FWAN…WASI), 138-158 (PPLY…AVAQ), 168-188 (VLQG…LADM), 200-220 (LMAI…ALFA), 227-247 (WIGW…FFFL), 267-287 (WIGM…LSWA), and 294-314 (GAWQ…IFAF). N335 carries N-linked (GlcNAc...) asparagine glycosylation. Transmembrane regions (helical) follow at residues 338-358 (LVGG…LPLI), 367-391 (AILS…SMML), 398-419 (YVWI…LALF), 429-449 (LGLP…LLPM), 460-480 (GLAI…GLTI), and 541-561 (FQTI…TSLF).

This sequence belongs to the major facilitator superfamily.

It localises to the membrane. MFS-type transporter; part of the gene cluster that mediates the biosynthesis of sphingofungins, bioactive molecules acting as sphingolipid inhibitors via inhibiting serine palmitoyl transferase (SPT). The protein is MFS-type transporter sphD of Aspergillus fumigatus (strain CBS 144.89 / FGSC A1163 / CEA10) (Neosartorya fumigata).